The sequence spans 218 residues: dTTP/UTP pyrophosphatase (218 aa).

The Proton acceptor role is filled by Asp69.

Belongs to the Maf family. YhdE subfamily. The cofactor is a divalent metal cation.

Its subcellular location is the cytoplasm. The enzyme catalyses dTTP + H2O = dTMP + diphosphate + H(+). The catalysed reaction is UTP + H2O = UMP + diphosphate + H(+). Functionally, nucleoside triphosphate pyrophosphatase that hydrolyzes dTTP and UTP. May have a dual role in cell division arrest and in preventing the incorporation of modified nucleotides into cellular nucleic acids. The polypeptide is dTTP/UTP pyrophosphatase (Thermomicrobium roseum (strain ATCC 27502 / DSM 5159 / P-2)).